The sequence spans 1010 residues: Sodium/potassium-transporting ATPase subunit alpha-3 (1010 aa).

A disordered region spans residues 1 to 21; sequence MGDKDDRFPKKKKGGTKDMDA. The Cytoplasmic portion of the chain corresponds to 1–74; it reads MGDKDDRFPK…NALTPPPTTP (74 aa). The segment at 69–71 is interaction with phosphoinositide-3 kinase; the sequence is PPP. A helical membrane pass occupies residues 75–95; it reads EWVKFCRQLFGGFSILLWTGA. The Extracellular portion of the chain corresponds to 96 to 118; sequence ILCFLAYAIQAATEDEPAGDNLY. A helical membrane pass occupies residues 119–139; sequence LGIVLTAVVVITGCFSYFQEA. Topologically, residues 140-275 are cytoplasmic; sequence KSSKIMESFK…TGKTPIAVEI (136 aa). A compositionally biased stretch (polar residues) spans 201-216; it reads DNSSLTGESEPQSRSP. A disordered region spans residues 201–221; the sequence is DNSSLTGESEPQSRSPDCTHD. The helical transmembrane segment at 276-295 threads the bilayer; it reads EHFIHIITGVAVFLGVTFFI. Residues 296 to 307 lie on the Extracellular side of the membrane; that stretch reads LAIILGYTWLKA. A helical transmembrane segment spans residues 308 to 325; that stretch reads VIFLIGIIVANVPEGLLA. Residues 326-759 lie on the Cytoplasmic side of the membrane; the sequence is TVTVCLTLTA…EEGRLIFDNL (434 aa). The active-site 4-aspartylphosphate intermediate is Asp-363. The Mg(2+) site is built by Asp-704 and Asp-708. The helical transmembrane segment at 760-779 threads the bilayer; the sequence is KKSIAYTLTSNIPEITPFLF. At 780–789 the chain is on the extracellular side; sequence FIIVNIPLAL. A helical membrane pass occupies residues 790-810; sequence GTITILCIDLGTDMGSAISLA. The Cytoplasmic portion of the chain corresponds to 811–830; that stretch reads YETAESDIMKRQPRNPCRDK. Residues 831–853 traverse the membrane as a helical segment; it reads LVNERLISIAYGQIGMIQALGGF. The Extracellular segment spans residues 854-905; it reads FSYFVILAENGFLPSQLVGIRLNWDDRSLNDLEDSYGQQWTYEQRKIVEFTC. The chain crosses the membrane as a helical span at residues 906-925; sequence HTAFFVSIVVVQWADLIICK. Over 926-938 the chain is Cytoplasmic; it reads TRRNSVFQQGMKN. Phosphoserine; by PKA is present on Ser-930. The helical transmembrane segment at 939-957 threads the bilayer; it reads KILIFGLFEETALAAFLSY. Over 958–972 the chain is Extracellular; it reads CPGMDVALRMYPLKP. The chain crosses the membrane as a helical span at residues 973–993; sequence TWWFWAFPYSFLIFVYDEARK. Residues 994–1010 are Cytoplasmic-facing; it reads LILCRNPGGWVEKETYY.

It belongs to the cation transport ATPase (P-type) (TC 3.A.3) family. Type IIC subfamily. As to quaternary structure, the sodium/potassium-transporting ATPase is composed of a catalytic alpha subunit, an auxiliary non-catalytic beta subunit and an additional regulatory subunit.

Its subcellular location is the cell membrane. It catalyses the reaction K(+)(out) + Na(+)(in) + ATP + H2O = K(+)(in) + Na(+)(out) + ADP + phosphate + H(+). In terms of biological role, this is the catalytic component of the active enzyme, which catalyzes the hydrolysis of ATP coupled with the exchange of sodium and potassium ions across the plasma membrane. This action creates the electrochemical gradient of sodium and potassium ions, providing the energy for active transport of various nutrients. The chain is Sodium/potassium-transporting ATPase subunit alpha-3 (atp1a3) from Oreochromis mossambicus (Mozambique tilapia).